A 357-amino-acid chain; its full sequence is Mannonate dehydratase (357 aa).

This sequence belongs to the mannonate dehydratase family. Fe(2+) is required as a cofactor. It depends on Mn(2+) as a cofactor.

The enzyme catalyses D-mannonate = 2-dehydro-3-deoxy-D-gluconate + H2O. The protein operates within carbohydrate metabolism; pentose and glucuronate interconversion. Catalyzes the dehydration of D-mannonate. This is Mannonate dehydratase from Sorangium cellulosum (strain So ce56) (Polyangium cellulosum (strain So ce56)).